A 355-amino-acid chain; its full sequence is Peptide chain release factor 1 (355 aa).

Position 233 is an N5-methylglutamine (glutamine 233).

The protein belongs to the prokaryotic/mitochondrial release factor family. Post-translationally, methylated by PrmC. Methylation increases the termination efficiency of RF1.

It localises to the cytoplasm. Peptide chain release factor 1 directs the termination of translation in response to the peptide chain termination codons UAG and UAA. The chain is Peptide chain release factor 1 from Rickettsia typhi (strain ATCC VR-144 / Wilmington).